Consider the following 226-residue polypeptide: Leucyl/phenylalanyl-tRNA--protein transferase (226 aa).

Belongs to the L/F-transferase family.

It localises to the cytoplasm. The catalysed reaction is N-terminal L-lysyl-[protein] + L-leucyl-tRNA(Leu) = N-terminal L-leucyl-L-lysyl-[protein] + tRNA(Leu) + H(+). The enzyme catalyses N-terminal L-arginyl-[protein] + L-leucyl-tRNA(Leu) = N-terminal L-leucyl-L-arginyl-[protein] + tRNA(Leu) + H(+). It catalyses the reaction L-phenylalanyl-tRNA(Phe) + an N-terminal L-alpha-aminoacyl-[protein] = an N-terminal L-phenylalanyl-L-alpha-aminoacyl-[protein] + tRNA(Phe). Functions in the N-end rule pathway of protein degradation where it conjugates Leu, Phe and, less efficiently, Met from aminoacyl-tRNAs to the N-termini of proteins containing an N-terminal arginine or lysine. In Pseudomonas aeruginosa (strain ATCC 15692 / DSM 22644 / CIP 104116 / JCM 14847 / LMG 12228 / 1C / PRS 101 / PAO1), this protein is Leucyl/phenylalanyl-tRNA--protein transferase.